Here is a 723-residue protein sequence, read N- to C-terminus: Polyribonucleotide nucleotidyltransferase (723 aa).

Mg(2+) contacts are provided by Asp488 and Asp494. In terms of domain architecture, KH spans 555 to 614 (PKIITLNIKPEKIKDVIGPGGKQINAIIEETGVKIDIEQDGTVYIASQDQAMNRKAIAII). One can recognise an S1 motif domain in the interval 624-692 (GEVYTGKVRR…HQGRVNLSRK (69 aa)). Positions 692–723 (KALLEKKEQPEGDKKPQAEKKFYPKTKKPESK) are disordered. Over residues 693–723 (ALLEKKEQPEGDKKPQAEKKFYPKTKKPESK) the composition is skewed to basic and acidic residues.

This sequence belongs to the polyribonucleotide nucleotidyltransferase family. Requires Mg(2+) as cofactor.

It is found in the cytoplasm. It carries out the reaction RNA(n+1) + phosphate = RNA(n) + a ribonucleoside 5'-diphosphate. Its function is as follows. Involved in mRNA degradation. Catalyzes the phosphorolysis of single-stranded polyribonucleotides processively in the 3'- to 5'-direction. This Listeria innocua serovar 6a (strain ATCC BAA-680 / CLIP 11262) protein is Polyribonucleotide nucleotidyltransferase.